Here is a 258-residue protein sequence, read N- to C-terminus: Thiamine thiazole synthase (258 aa).

Residues alanine 36, 55–56 (EK), glycine 63, valine 127, and 154–156 (HVD) contribute to the NAD(+) site. Positions 156 and 171 each coordinate Fe cation. Residue methionine 224 participates in NAD(+) binding. Arginine 234 serves as a coordination point for glycine.

This sequence belongs to the THI4 family. In terms of assembly, homooctamer; tetramer of dimers. Fe(2+) is required as a cofactor.

The enzyme catalyses hydrogen sulfide + glycine + NAD(+) = ADP-5-ethyl-4-methylthiazole-2-carboxylate + nicotinamide + 3 H2O + H(+). Its pathway is cofactor biosynthesis; thiamine diphosphate biosynthesis. In terms of biological role, involved in the biosynthesis of the thiazole moiety of thiamine. Catalyzes the conversion of NAD and glycine to adenosine diphosphate 5-(2-hydroxyethyl)-4-methylthiazole-2-carboxylate (ADT), an adenylated thiazole intermediate, using free sulfide as a source of sulfur. The sequence is that of Thiamine thiazole synthase from Methanococcoides burtonii (strain DSM 6242 / NBRC 107633 / OCM 468 / ACE-M).